The following is a 283-amino-acid chain: Pantothenate synthetase (283 aa).

30–37 lines the ATP pocket; it reads MGNLHDGH. H37 (proton donor) is an active-site residue. Q61 contacts (R)-pantoate. Residue Q61 coordinates beta-alanine. An ATP-binding site is contributed by 149–152; the sequence is GEKD. Position 155 (Q155) interacts with (R)-pantoate. 186–189 contributes to the ATP binding site; sequence LSSR.

It belongs to the pantothenate synthetase family. In terms of assembly, homodimer.

It localises to the cytoplasm. It carries out the reaction (R)-pantoate + beta-alanine + ATP = (R)-pantothenate + AMP + diphosphate + H(+). The protein operates within cofactor biosynthesis; (R)-pantothenate biosynthesis; (R)-pantothenate from (R)-pantoate and beta-alanine: step 1/1. In terms of biological role, catalyzes the condensation of pantoate with beta-alanine in an ATP-dependent reaction via a pantoyl-adenylate intermediate. This is Pantothenate synthetase from Escherichia coli (strain ATCC 8739 / DSM 1576 / NBRC 3972 / NCIMB 8545 / WDCM 00012 / Crooks).